Consider the following 478-residue polypeptide: Cytochrome c-552 (478 aa).

Residues 1 to 26 (MARKTLRARRFFSLIFPFFFITSVYA) form the signal peptide. Histidine 94 serves as a coordination point for heme c. Cysteine 122, cysteine 125, and lysine 126 together coordinate heme. Cysteine 160, cysteine 163, histidine 164, cysteine 209, cysteine 212, and histidine 213 together coordinate heme c. Ca(2+)-binding residues include glutamate 215, tyrosine 216, lysine 261, and glutamine 263. Position 216 (tyrosine 216) interacts with substrate. Position 264 (histidine 264) interacts with substrate. 9 residues coordinate heme c: histidine 275, cysteine 282, cysteine 285, histidine 286, histidine 301, cysteine 314, cysteine 317, histidine 318, and histidine 393.

This sequence belongs to the cytochrome c-552 family. Ca(2+) serves as cofactor. The cofactor is heme c.

It localises to the periplasm. The enzyme catalyses 6 Fe(III)-[cytochrome c] + NH4(+) + 2 H2O = 6 Fe(II)-[cytochrome c] + nitrite + 8 H(+). Its pathway is nitrogen metabolism; nitrate reduction (assimilation). Its function is as follows. Catalyzes the reduction of nitrite to ammonia, consuming six electrons in the process. The polypeptide is Cytochrome c-552 (Salmonella agona (strain SL483)).